The primary structure comprises 139 residues: FAD synthase (139 aa).

Residues 9 to 10, 14 to 17, and Asn92 contribute to the ATP site; these read TF and HPGH.

It belongs to the archaeal FAD synthase family. Homodimer. Requires a divalent metal cation as cofactor.

It carries out the reaction FMN + ATP + H(+) = FAD + diphosphate. It functions in the pathway cofactor biosynthesis; FAD biosynthesis; FAD from FMN: step 1/1. In terms of biological role, catalyzes the transfer of the AMP portion of ATP to flavin mononucleotide (FMN) to produce flavin adenine dinucleotide (FAD) coenzyme. This is FAD synthase from Methanocella paludicola (strain DSM 17711 / JCM 13418 / NBRC 101707 / SANAE).